The chain runs to 100 residues: Signal recognition particle 19 kDa protein (100 aa).

The protein belongs to the SRP19 family. As to quaternary structure, part of the signal recognition particle protein translocation system, which is composed of SRP and FtsY. Archaeal SRP consists of a 7S RNA molecule of 300 nucleotides and two protein subunits: SRP54 and SRP19.

The protein localises to the cytoplasm. In terms of biological role, involved in targeting and insertion of nascent membrane proteins into the cytoplasmic membrane. Binds directly to 7S RNA and mediates binding of the 54 kDa subunit of the SRP. This is Signal recognition particle 19 kDa protein from Caldivirga maquilingensis (strain ATCC 700844 / DSM 13496 / JCM 10307 / IC-167).